The primary structure comprises 101 residues: Transcription and mRNA export factor SUS1 (101 aa).

Belongs to the ENY2 family. In terms of assembly, component of the nuclear pore complex (NPC)-associated TREX-2 complex (transcription and export complex 2), composed of at least SUS1, SAC3, THP1, SEM1, and CDC31. TREX-2 contains 2 SUS1 chains. The TREX-2 complex interacts with the nucleoporin NUP1. Component of the 1.8 MDa SAGA transcription coactivator-HAT complex. SAGA is built of 5 distinct domains with specialized functions. Within the SAGA complex, SUS1, SGF11, SGF73 and UBP8 form an additional subcomplex of SAGA called the DUB module (deubiquitination module). Interacts directly with THP1, SAC3, SGF11, and with the RNA polymerase II.

It is found in the nucleus. Its subcellular location is the nucleoplasm. The protein resides in the cytoplasm. It localises to the P-body. Involved in mRNA export coupled transcription activation by association with both the TREX-2 and the SAGA complexes. At the promoters, SAGA is required for recruitment of the basal transcription machinery. It influences RNA polymerase II transcriptional activity through different activities such as TBP interaction and promoter selectivity, interaction with transcription activators, and chromatin modification through histone acetylation and deubiquitination. Within the SAGA complex, participates in a subcomplex required for deubiquitination of H2B and for the maintenance of steady-state H3 methylation levels. The TREX-2 complex functions in docking export-competent ribonucleoprotein particles (mRNPs) to the nuclear entrance of the nuclear pore complex (nuclear basket). TREX-2 participates in mRNA export and accurate chromatin positioning in the nucleus by tethering genes to the nuclear periphery. May also be involved in cytoplasmic mRNA decay by interaction with components of P-bodies. The sequence is that of Transcription and mRNA export factor SUS1 from Debaryomyces hansenii (strain ATCC 36239 / CBS 767 / BCRC 21394 / JCM 1990 / NBRC 0083 / IGC 2968) (Yeast).